A 660-amino-acid polypeptide reads, in one-letter code: Bifunctional polymyxin resistance protein ArnA (660 aa).

The segment at 1–304 is formyltransferase ArnAFT; sequence MKTVVFAYHD…MLGLVQGSRL (304 aa). 86 to 88 contacts (6R)-10-formyltetrahydrofolate; it reads HLI. H104 acts as the Proton donor; for formyltransferase activity in catalysis. (6R)-10-formyltetrahydrofolate contacts are provided by residues R114 and 136–140; that span reads VKRAD. Positions 314-660 are dehydrogenase ArnADH; it reads RRTRVLILGV…RTVDLTDKPS (347 aa). NAD(+)-binding positions include D347 and 368–369; that span reads DI. UDP-alpha-D-glucuronate is bound by residues A393, Y398, and 432–433; that span reads TS. The active-site Proton acceptor; for decarboxylase activity is E434. Residues R460, N492, 526–535, and Y613 each bind UDP-alpha-D-glucuronate; that span reads KLIDGGKQKR. Residue R619 is the Proton donor; for decarboxylase activity of the active site.

In the N-terminal section; belongs to the Fmt family. UDP-L-Ara4N formyltransferase subfamily. This sequence in the C-terminal section; belongs to the NAD(P)-dependent epimerase/dehydratase family. UDP-glucuronic acid decarboxylase subfamily. As to quaternary structure, homohexamer, formed by a dimer of trimers.

The catalysed reaction is UDP-alpha-D-glucuronate + NAD(+) = UDP-beta-L-threo-pentopyranos-4-ulose + CO2 + NADH. It carries out the reaction UDP-4-amino-4-deoxy-beta-L-arabinose + (6R)-10-formyltetrahydrofolate = UDP-4-deoxy-4-formamido-beta-L-arabinose + (6S)-5,6,7,8-tetrahydrofolate + H(+). It functions in the pathway nucleotide-sugar biosynthesis; UDP-4-deoxy-4-formamido-beta-L-arabinose biosynthesis; UDP-4-deoxy-4-formamido-beta-L-arabinose from UDP-alpha-D-glucuronate: step 1/3. Its pathway is nucleotide-sugar biosynthesis; UDP-4-deoxy-4-formamido-beta-L-arabinose biosynthesis; UDP-4-deoxy-4-formamido-beta-L-arabinose from UDP-alpha-D-glucuronate: step 3/3. The protein operates within bacterial outer membrane biogenesis; lipopolysaccharide biosynthesis. Its function is as follows. Bifunctional enzyme that catalyzes the oxidative decarboxylation of UDP-glucuronic acid (UDP-GlcUA) to UDP-4-keto-arabinose (UDP-Ara4O) and the addition of a formyl group to UDP-4-amino-4-deoxy-L-arabinose (UDP-L-Ara4N) to form UDP-L-4-formamido-arabinose (UDP-L-Ara4FN). The modified arabinose is attached to lipid A and is required for resistance to polymyxin and cationic antimicrobial peptides. The chain is Bifunctional polymyxin resistance protein ArnA from Shigella flexneri.